Reading from the N-terminus, the 332-residue chain is Ribosomal RNA small subunit methyltransferase H (332 aa).

S-adenosyl-L-methionine is bound by residues Gly-39–Tyr-41, Asp-56, Phe-83, Asp-100, and Gln-107.

Belongs to the methyltransferase superfamily. RsmH family.

It localises to the cytoplasm. The enzyme catalyses cytidine(1402) in 16S rRNA + S-adenosyl-L-methionine = N(4)-methylcytidine(1402) in 16S rRNA + S-adenosyl-L-homocysteine + H(+). In terms of biological role, specifically methylates the N4 position of cytidine in position 1402 (C1402) of 16S rRNA. The polypeptide is Ribosomal RNA small subunit methyltransferase H (Bartonella tribocorum (strain CIP 105476 / IBS 506)).